We begin with the raw amino-acid sequence, 335 residues long: Abasic site processing protein HMCES (335 aa).

Cys-2 serves as the catalytic Nucleophile. At Cys-2 the chain carries Thiazolidine linkage to a ring-opened DNA abasic site. Basic and acidic residues predominate over residues 24 to 39; it reads QGGRKWPNWRDGDSDK. The interval 24 to 51 is disordered; it reads QGGRKWPNWRDGDSDKYQPSYNKSPQSN. Positions 40 to 51 are enriched in polar residues; sequence YQPSYNKSPQSN. Glu-129 is a catalytic residue. The tract at residues 284–335 is disordered; the sequence is LQNKSPKKEESHSIQSPKLSQFGAPPKKTSAGLMQQWLKKEDGEPSPKRAKK. A compositionally biased stretch (basic and acidic residues) spans 321 to 335; sequence LKKEDGEPSPKRAKK.

This sequence belongs to the SOS response-associated peptidase family. In terms of processing, ubiquitination of the hmces DNA-protein cross-link by rfwd3 may promotes its degradation.

It is found in the chromosome. With respect to regulation, formation and reversal of DNA-protein cross-link depends on DNA context. Catalyzes formation of the thiazolidine linkage in presence of abasic sites in single-stranded DNA. Mediates the reversal of the thiazolidine cross-link in presence of double stranded DNA. In terms of biological role, sensor of abasic sites in single-stranded DNA (ssDNA) required to preserve genome integrity by promoting error-free repair of abasic sites. Acts as an enzyme that recognizes and binds abasic sites in ssDNA at replication forks and chemically modifies the lesion by forming a covalent cross-link with DNA: forms a stable thiazolidine linkage between a ring-opened abasic site and the alpha-amino and sulfhydryl substituents of its N-terminal catalytic cysteine residue. The hmces DNA-protein cross-link is then either reversed or degraded. Hmces is able to catalyze the reversal of its thiazolidine cross-link and cycle between a cross-link and a non-cross-linked state depending on DNA context: mediates self-reversal of the thiazolidine cross-link in double stranded DNA, allowing apex1 to initiate downstream repair of abasic sites. The hmces DNA-protein cross-link can also be degraded by the sprtn metalloprotease following unfolding by the brip1/fancj helicase. Promotes error-free repair of abasic sites by protecting abasic sites from translesion synthesis (TLS) polymerases and endonucleases that are error-prone and would generate mutations and double-strand breaks. Acts as a protease: mediates autocatalytic processing of its N-terminal methionine in order to expose the catalytic cysteine. The hmces DNA-protein cross-link is then either reversed or degraded. According to a model, the HMCES DNA-protein cross-link. The chain is Abasic site processing protein HMCES from Xenopus tropicalis (Western clawed frog).